A 64-amino-acid chain; its full sequence is Large ribosomal subunit protein bL28 (64 aa).

It belongs to the bacterial ribosomal protein bL28 family.

The protein is Large ribosomal subunit protein bL28 of Campylobacter jejuni subsp. jejuni serotype O:6 (strain 81116 / NCTC 11828).